The chain runs to 213 residues: Protein-L-isoaspartate O-methyltransferase (213 aa).

The active site involves Ser-64.

The protein belongs to the methyltransferase superfamily. L-isoaspartyl/D-aspartyl protein methyltransferase family.

It is found in the cytoplasm. The catalysed reaction is [protein]-L-isoaspartate + S-adenosyl-L-methionine = [protein]-L-isoaspartate alpha-methyl ester + S-adenosyl-L-homocysteine. Catalyzes the methyl esterification of L-isoaspartyl residues in peptides and proteins that result from spontaneous decomposition of normal L-aspartyl and L-asparaginyl residues. It plays a role in the repair and/or degradation of damaged proteins. The chain is Protein-L-isoaspartate O-methyltransferase from Flavobacterium psychrophilum (strain ATCC 49511 / DSM 21280 / CIP 103535 / JIP02/86).